We begin with the raw amino-acid sequence, 1328 residues long: WASH complex subunit 2 (1328 aa).

The interval 1–219 is sufficient for interaction with WASHC3, WASHC4 and WASHC5; required for interaction with WASHC1; that stretch reads MNRTSPDSEQ…VGSDRGSIVD (219 aa). S157, S159, S204, S205, and S209 each carry phosphoserine. A compositionally biased stretch (low complexity) spans 201-213; it reads GELSSEEGSVGSD. 2 disordered regions span residues 201–655 and 675–830; these read GELS…KTNL and KKTQ…PKST. Composition is skewed to acidic residues over residues 219–231 and 248–273; these read DSED…ESDD and SDEE…EDIE. S283 is modified (phosphoserine). The span at 288 to 323 shows a compositional bias: basic and acidic residues; sequence LAARIKGDVSNQRKEGHTDGKPQRTVKEKKERRTPA. T321 bears the Phosphothreonine mark. Positions 346–592 are sufficient for interaction with CCDC93; that stretch reads SRGGLFSDRQ…QTSSLPPQSQ (247 aa). The segment at 347–1328 is interaction with VPS35; it reads RGGLFSDRQG…DDPLNAFGSQ (982 aa). Residues 357-367 carry the LFa 1 motif; sequence LFDDDDESDLF. 2 positions are modified to phosphoserine: S384 and S387. 2 consecutive short sequence motifs (LFa) follow at residues 440-455 and 474-483; these read LFDD…DNFF and IFDDDEGDLF. A compositionally biased stretch (acidic residues) spans 441-453; it reads FDDDDNDSDEDDN. A compositionally biased stretch (polar residues) spans 508–528; the sequence is TITLPSSKNPKLVSETKTQKG. 2 consecutive short sequence motifs (LFa) follow at residues 529-540 and 564-575; these read LFSDEEDSEDLF and LFGDEDEEDNLF. S531 and S536 each carry phosphoserine. Residues 539-556 are compositionally biased toward low complexity; the sequence is LFSSQSSSKTKSASVLSS. Polar residues predominate over residues 582-592; that stretch reads KQTSSLPPQSQ. 2 positions are modified to phosphoserine: S610 and S611. Over residues 627 to 638 the composition is skewed to basic and acidic residues; sequence ASERKSKGERWD. 2 consecutive short sequence motifs (LFa) follow at residues 655 to 667 and 683 to 695; these read LFEE…VDLF and LFED…SSLF. Over residues 690 to 699 the composition is skewed to polar residues; it reads SGSSLFSLPP. A phosphoserine mark is found at S720, S744, S749, S780, and S795. Positions 797-808 are enriched in acidic residues; sequence FDEDEDKVEDDS. Short sequence motifs (LFa) lie at residues 832–840 and 849–855; these read VFQDEELLF and DPDVDLF. Disordered regions lie at residues 863-940 and 991-1088; these read LSMP…EPSS and PTLP…AMAV. 2 positions are modified to phosphoserine: S867 and S870. Residues 871-881 carry the LFa 10 motif; the sequence is LFGDDDDDDLF. Basic and acidic residues predominate over residues 894–919; sequence PEKKGTLRKDHKPPELTEGSKEKSTW. The segment at 925 to 1328 is interaction with phospholipids; the sequence is QDSSGLTPFK…DDPLNAFGSQ (404 aa). The segment covering 1016 to 1034 has biased composition (basic residues); sequence NKGRVKVRGKRRPQTRAAR. Residues 1017 to 1035 are required for interaction with F-actin-capping protein subunit alpha (CAPZA1 or CAPZA2 or CAPZA3); sequence KGRVKVRGKRRPQTRAARR. Phosphoserine is present on residues S1042, S1060, S1077, and S1102. Residues 1115 to 1210 form a disordered region; that stretch reads AHLFDSGDIF…KKNQWKSDSH (96 aa). 3 consecutive short sequence motifs (LFa) follow at residues 1117–1124, 1157–1171, and 1187–1195; these read LFDSGDIF, VFPD…DDLF, and LLEDEEDLF. Phosphoserine occurs at positions 1162 and 1165. The span at 1196–1210 shows a compositional bias: basic and acidic residues; that stretch reads ADQKGKKNQWKSDSH. 3 consecutive short sequence motifs (LFa) follow at residues 1220 to 1226, 1249 to 1257, and 1277 to 1286; these read IFEDDIF, LFDDNIDIF, and MFDDDTDDIF. A disordered region spans residues 1289-1310; it reads GLQAKASKPKSQSAEAVSELRS. Positions 1317–1325 match the LFa 17 motif; it reads IFDDPLNAF. Residue S1327 is modified to Phosphoserine.

Belongs to the FAM21 family. In terms of assembly, component of the WASH core complex also described as WASH regulatory complex (SHRC) composed of WASHC1, WASHC2, WASHC3, WASHC4 and WASHC5; in the complex interacts (via N-terminus) directly with WASHC1. The WASH core complex associates with the F-actin-capping protein dimer (formed by CAPZA1, CAPZA2 or CAPZA3 and CAPZB) in a transient or substoichiometric manner which was initially described as WASH complex. Interacts with VPS35; mediates the association with the retromer CSC complex. Interacts with FKBP15. Interacts with CCDC93, CCDC22, VPS35L; indicative for an association of the WASH core complex with the CCC and retriever complexes. Directly interacts with TBC1D23.

Its subcellular location is the early endosome membrane. It is found in the cell membrane. Functionally, acts as a component of the WASH core complex that functions as a nucleation-promoting factor (NPF) at the surface of endosomes, where it recruits and activates the Arp2/3 complex to induce actin polymerization, playing a key role in the fission of tubules that serve as transport intermediates during endosome sorting. Mediates the recruitment of the WASH core complex to endosome membranes via binding to phospholipids and VPS35 of the retromer CSC. Mediates the recruitment of the F-actin-capping protein dimer to the WASH core complex probably promoting localized F-actin polymerization needed for vesicle scission. Via its C-terminus binds various phospholipids, most strongly phosphatidylinositol 4-phosphate (PtdIns-(4)P), phosphatidylinositol 5-phosphate (PtdIns-(5)P) and phosphatidylinositol 3,5-bisphosphate (PtdIns-(3,5)P2). Involved in the endosome-to-plasma membrane trafficking and recycling of SNX27-retromer-dependent cargo proteins, such as GLUT1. Required for the association of DNAJC13, ENTR1, ANKRD50 with retromer CSC subunit VPS35. Required for the endosomal recruitment of CCC and retriever complexes subunits COMMD1 and CCDC93 as well as the retrievere complex subunit VPS35L. This chain is WASH complex subunit 2, found in Rattus norvegicus (Rat).